The following is a 179-amino-acid chain: UPF0227 protein Swoo_1808 (179 aa).

This sequence belongs to the UPF0227 family.

The sequence is that of UPF0227 protein Swoo_1808 from Shewanella woodyi (strain ATCC 51908 / MS32).